Reading from the N-terminus, the 597-residue chain is Elongation factor 4 (597 aa).

A tr-type G domain is found at 2–184 (DHIRNFSIIA…ALIAKVPPPK (183 aa)). Residues 14 to 19 (DHGKST) and 131 to 134 (NKID) each bind GTP.

The protein belongs to the TRAFAC class translation factor GTPase superfamily. Classic translation factor GTPase family. LepA subfamily.

The protein resides in the cell inner membrane. It carries out the reaction GTP + H2O = GDP + phosphate + H(+). Its function is as follows. Required for accurate and efficient protein synthesis under certain stress conditions. May act as a fidelity factor of the translation reaction, by catalyzing a one-codon backward translocation of tRNAs on improperly translocated ribosomes. Back-translocation proceeds from a post-translocation (POST) complex to a pre-translocation (PRE) complex, thus giving elongation factor G a second chance to translocate the tRNAs correctly. Binds to ribosomes in a GTP-dependent manner. This chain is Elongation factor 4, found in Cupriavidus taiwanensis (strain DSM 17343 / BCRC 17206 / CCUG 44338 / CIP 107171 / LMG 19424 / R1) (Ralstonia taiwanensis (strain LMG 19424)).